Here is a 142-residue protein sequence, read N- to C-terminus: HTH-type transcriptional regulator MntR (142 aa).

Residues 1-63 (MPTPSMEDYI…YEKYRGLVLT (63 aa)) form the HTH dtxR-type domain. Mn(2+) is bound by residues Asp8, Glu11, His77, Glu99, Glu102, and His103.

It belongs to the DtxR/MntR family. Homodimer.

It is found in the cytoplasm. DNA binding is strongly activated by Mn(2+). Its function is as follows. Central regulator of manganese homeostasis. The polypeptide is HTH-type transcriptional regulator MntR (Bacillus mycoides (strain KBAB4) (Bacillus weihenstephanensis)).